Here is a 68-residue protein sequence, read N- to C-terminus: Metallothionein-3 (68 aa).

An N-acetylmethionine modification is found at M1. The tract at residues 1–30 is beta; sequence MDPETCPCPSGGSCTCADSCKCEGCKCTSC. C6, C8, C14, C16, C20, C22, C25, C27, and C30 together coordinate a divalent metal cation. The tract at residues 31 to 68 is alpha; sequence KKSCCSCCPAECEKCAKDCVCKGGEAAEAEAEKCSCCQ. The residue at position 33 (S33) is a Phosphoserine. The a divalent metal cation site is built by C34, C35, C37, C38, C42, C45, C49, C51, C64, C66, and C67.

The protein belongs to the metallothionein superfamily. Type 1 family. As to expression, abundant in a subset of astrocytes in the normal human brain, but greatly reduced in the Alzheimer disease (AD) brain.

Binds heavy metals. Contains three zinc and three copper atoms per polypeptide chain and only a negligible amount of cadmium. Inhibits survival and neurite formation of cortical neurons in vitro. This Homo sapiens (Human) protein is Metallothionein-3 (MT3).